A 382-amino-acid chain; its full sequence is Lactaldehyde reductase (382 aa).

Residues aspartate 38, asparagine 70, 97–98 (GS), 139–143 (TTAGT), asparagine 150, lysine 161, and 180–184 (MMDGM) each bind NAD(+). Residues aspartate 195, histidine 199, histidine 262, and histidine 276 each coordinate Fe cation.

This sequence belongs to the iron-containing alcohol dehydrogenase family. Homodimer. It depends on Fe cation as a cofactor.

The enzyme catalyses (R)-propane-1,2-diol + NAD(+) = (R)-lactaldehyde + NADH + H(+). The catalysed reaction is (S)-propane-1,2-diol + NAD(+) = (S)-lactaldehyde + NADH + H(+). Its pathway is carbohydrate degradation; L-fucose degradation. The chain is Lactaldehyde reductase (fucO) from Escherichia coli O157:H7.